Consider the following 179-residue polypeptide: Cell division protein SepF (179 aa).

The disordered stretch occupies residues 18 to 55; it reads EDSSLPYEKRDEPVFTPVNSSQEPALPMNQPSQSAGTK. Residues 34-55 are compositionally biased toward polar residues; sequence PVNSSQEPALPMNQPSQSAGTK.

This sequence belongs to the SepF family. As to quaternary structure, homodimer. Interacts with FtsZ.

The protein resides in the cytoplasm. Functionally, cell division protein that is part of the divisome complex and is recruited early to the Z-ring. Probably stimulates Z-ring formation, perhaps through the cross-linking of FtsZ protofilaments. Its function overlaps with FtsA. This chain is Cell division protein SepF, found in Streptococcus pneumoniae (strain ATCC 700669 / Spain 23F-1).